A 152-amino-acid chain; its full sequence is Large ribosomal subunit protein uL15 (152 aa).

The tract at residues 1–57 (MTSTLNTLKSNSGSRKKKLRKGRGIAAGQGASCGFGMRGQKSRSGRPTRPGFEGGQM) is disordered. The segment covering 14-23 (SRKKKLRKGR) has biased composition (basic residues). Residues 25–37 (IAAGQGASCGFGM) show a composition bias toward gly residues.

It belongs to the universal ribosomal protein uL15 family. As to quaternary structure, part of the 50S ribosomal subunit.

Functionally, binds to the 23S rRNA. The protein is Large ribosomal subunit protein uL15 of Prochlorococcus marinus (strain MIT 9215).